The following is an 80-amino-acid chain: LSM complex subunit lsm5 (80 aa).

A Sm domain is found at 6–79; sequence LPLELIDKCI…MCMLIPGGKP (74 aa).

The protein belongs to the snRNP Sm proteins family. In terms of assembly, component of the heptameric LSM1-LSM7 complex that forms a seven-membered ring structure with a donut shape. The LSm subunits are arranged in the order lsm1, lsm2, lsm3, lsm6, lsm5, lsm7 and lsm4. Component of the heptameric LSM2-LSM8 complex that forms a seven-membered ring structure with a donut shape. The LSm subunits are arranged in the order lsm8, lsm2, lsm3, lsm6, lsm5, lsm7 and lsm4.

It is found in the nucleus. Functionally, component of LSm protein complexes, which are involved in RNA processing and may function in a chaperone-like manner. Component of the cytoplasmic LSM1-LSM7 complex which is involved in mRNA degradation by activating the decapping step. The LSM1-LSM7 complex loads onto the 3'-end of single stranded RNA. Component of the nuclear LSM2-LSM8 complex, which is involved in spliceosome assembly. The LSM2-LSM8 complex plays a role in the biogenesis of the spliceosomal U4/U6-U5 tri-snRNP complex by accelerating prp24-mediated annealing of U4/U6 di-snRNA. The LSM2-LSM8 complex binds U6 snRNA terminating with a cyclic 2',3' phosphate group; RNA with an unmodified 3' hydroxyl or non-cyclic 3' phosphate is bound less tightly. The sequence is that of LSM complex subunit lsm5 (lsm5) from Schizosaccharomyces pombe (strain 972 / ATCC 24843) (Fission yeast).